The sequence spans 192 residues: Small ribosomal subunit protein bS16 (192 aa).

The tract at residues 153-192 (AEAKAKAEAEAAAAAEEAAETEETPVEAAAEEAPAAESAE) is disordered. Low complexity predominate over residues 178-192 (VEAAAEEAPAAESAE).

The protein belongs to the bacterial ribosomal protein bS16 family.

The protein is Small ribosomal subunit protein bS16 of Porphyromonas gingivalis (strain ATCC BAA-308 / W83).